Reading from the N-terminus, the 37-residue chain is Large ribosomal subunit protein bL36 (37 aa).

Belongs to the bacterial ribosomal protein bL36 family.

The polypeptide is Large ribosomal subunit protein bL36 (Salinispora tropica (strain ATCC BAA-916 / DSM 44818 / JCM 13857 / NBRC 105044 / CNB-440)).